The sequence spans 313 residues: Ribose-phosphate pyrophosphokinase (313 aa).

ATP-binding positions include aspartate 40–glutamate 42 and arginine 98–glutamine 99. Residues histidine 132 and aspartate 172 each coordinate Mg(2+). Lysine 195 is a catalytic residue. D-ribose 5-phosphate contacts are provided by residues arginine 197, aspartate 221, and aspartate 225–threonine 229.

The protein belongs to the ribose-phosphate pyrophosphokinase family. Class I subfamily. In terms of assembly, homohexamer. Mg(2+) is required as a cofactor.

The protein resides in the cytoplasm. The catalysed reaction is D-ribose 5-phosphate + ATP = 5-phospho-alpha-D-ribose 1-diphosphate + AMP + H(+). It functions in the pathway metabolic intermediate biosynthesis; 5-phospho-alpha-D-ribose 1-diphosphate biosynthesis; 5-phospho-alpha-D-ribose 1-diphosphate from D-ribose 5-phosphate (route I): step 1/1. Its function is as follows. Involved in the biosynthesis of the central metabolite phospho-alpha-D-ribosyl-1-pyrophosphate (PRPP) via the transfer of pyrophosphoryl group from ATP to 1-hydroxyl of ribose-5-phosphate (Rib-5-P). This chain is Ribose-phosphate pyrophosphokinase, found in Porphyromonas gingivalis (strain ATCC BAA-308 / W83).